A 161-amino-acid chain; its full sequence is Ribonuclease H (161 aa).

Residues 11 to 152 (GPRPVVIHTD…ADQLARDGLT (142 aa)) enclose the RNase H type-1 domain. Residues Asp-20, Glu-58, Asp-80, and Asp-144 each coordinate Mg(2+). The interval 137 to 161 (HDENERADQLARDGLTENRMKSRIG) is disordered.

The protein belongs to the RNase H family. As to quaternary structure, monomer. It depends on Mg(2+) as a cofactor.

The protein resides in the cytoplasm. The enzyme catalyses Endonucleolytic cleavage to 5'-phosphomonoester.. Its function is as follows. Endonuclease that specifically degrades the RNA of RNA-DNA hybrids. This chain is Ribonuclease H, found in Rhodopseudomonas palustris (strain HaA2).